We begin with the raw amino-acid sequence, 506 residues long: Maturase K (506 aa).

The protein belongs to the intron maturase 2 family. MatK subfamily.

The protein localises to the plastid. It is found in the chloroplast. Usually encoded in the trnK tRNA gene intron. Probably assists in splicing its own and other chloroplast group II introns. This is Maturase K from Jurinea cyanoides.